The primary structure comprises 516 residues: GMP synthase [glutamine-hydrolyzing] (516 aa).

The Glutamine amidotransferase type-1 domain occupies 8 to 198; sequence KILILDFGSQ…VVNICGCDTL (191 aa). Catalysis depends on C84, which acts as the Nucleophile. Residues H172 and E174 contribute to the active site. The GMPS ATP-PPase domain occupies 199–391; it reads WNIENIIEND…LGLPYNMLYR (193 aa). 226–232 is a binding site for ATP; sequence SGGVDSS.

Homodimer.

The catalysed reaction is XMP + L-glutamine + ATP + H2O = GMP + L-glutamate + AMP + diphosphate + 2 H(+). It functions in the pathway purine metabolism; GMP biosynthesis; GMP from XMP (L-Gln route): step 1/1. Catalyzes the synthesis of GMP from XMP. The polypeptide is GMP synthase [glutamine-hydrolyzing] (Francisella tularensis subsp. mediasiatica (strain FSC147)).